Consider the following 392-residue polypeptide: Succinate--CoA ligase [ADP-forming] subunit beta (392 aa).

The ATP-grasp domain occupies 9 to 247 (KAILRKYGVA…VTEEDPLEVE (239 aa)). ATP is bound by residues K49, 56-58 (GRG), E102, L105, and E110. 2 residues coordinate Mg(2+): N202 and D216. Residues N267 and 324 to 326 (GIL) contribute to the substrate site.

It belongs to the succinate/malate CoA ligase beta subunit family. Heterotetramer of two alpha and two beta subunits. Mg(2+) serves as cofactor.

The catalysed reaction is succinate + ATP + CoA = succinyl-CoA + ADP + phosphate. It carries out the reaction GTP + succinate + CoA = succinyl-CoA + GDP + phosphate. The protein operates within carbohydrate metabolism; tricarboxylic acid cycle; succinate from succinyl-CoA (ligase route): step 1/1. Functionally, succinyl-CoA synthetase functions in the citric acid cycle (TCA), coupling the hydrolysis of succinyl-CoA to the synthesis of either ATP or GTP and thus represents the only step of substrate-level phosphorylation in the TCA. The beta subunit provides nucleotide specificity of the enzyme and binds the substrate succinate, while the binding sites for coenzyme A and phosphate are found in the alpha subunit. The chain is Succinate--CoA ligase [ADP-forming] subunit beta from Koribacter versatilis (strain Ellin345).